We begin with the raw amino-acid sequence, 643 residues long: E3 ubiquitin-protein ligase AMFR (643 aa).

The tract at residues 39 to 67 (PEAGPGEPDQLTASLQPEPPAPARPSAGG) is disordered. Helical transmembrane passes span 82-102 (LFVW…AKLI), 122-142 (FWNF…VQTV), 145-165 (VVMW…VQLC), 186-206 (VLSL…VCSI), 215-235 (TLAF…HVIL), and 276-296 (HIHM…VIFM). The segment at 341-379 (CAICWDSMQAARKLPCGHLFHNSCLRSWLEQDTSCPTCR) adopts an RING-type zinc-finger fold. A helical membrane pass occupies residues 429–449 (IASWLPSFSVEVMHTTNILGI). The region spanning 456-498 (QLNAMAHQIQEMFPQVPYHLVLQDLQLTRSVEITTDNILEGRI) is the CUE domain. 2 disordered regions span residues 504-579 (TQRS…DERQ) and 596-624 (RFLN…PVTL). A phosphoserine mark is found at serine 516, serine 523, and serine 542. The span at 548-563 (TLDFGEVEVEPSEVED) shows a compositional bias: acidic residues. The segment covering 564–579 (FEARGSRFSKSADERQ) has biased composition (basic and acidic residues). The segment at 622 to 640 (VTLRRRMLAAAAERRLQKQ) is VCP/p97-interacting motif (VIM).

Interacts with RNF5. Also forms an ERAD complex containing VCP/p97, NGLY1; PSMC1; SAKS1 and RAD23B required for coupling retrotranslocation, ubiquitination and deglycosylation. Interacts with DERL1. Interacts (through a region distinct from the RING finger) with UBE2G2/UBC7. Component of the VCP/p97-AMFR/gp78 complex that enhances VCP/p97 binding to polyubiquitinated proteins for their degradation by the endoplasmic reticulum-associated degradation (ERAD) pathway. Interacts (via the VIM) with VCP/p97. Interacts (via its membrane domain) with INSIG1; the interaction initiates the sterol-mediated ubiquitination and degradation of HMGCR by the ERAD pathway. Interacts with AUP1, UBE2G2 and RNF139/TRC8; interaction with AUP1 facilitates interaction of AMFR with ubiquitin-conjugating enzyme UBE2G2 and ubiquitin ligase RNF139, leading to sterol-induced ubiquitination of HMGCR and its subsequent proteasomal degradation. Interacts with BAG6. Interacts with USP13 (via UBA 2 domain); the interaction is direct. Interacts with LMBR1L. Interacts with UBAC2 and CTNNB1. Interacts with C18orf32. In terms of assembly, (Microbial infection) Interacts with Staphylococcus aureus HIgB; this interaction regulates AMFR-mediated inflammation by promoting TAB3 ubiquitination to promote TAB3-TAK1 complex formation. In terms of processing, palmitoylation of the RING-type zing finger by ZDHHC6 promotes localization to the peripheral endoplasmic reticulum. As to expression, widely expressed.

Its subcellular location is the endoplasmic reticulum membrane. The enzyme catalyses [E2 ubiquitin-conjugating enzyme]-S-ubiquitinyl-L-cysteine + [acceptor protein]-L-cysteine = [E2 ubiquitin-conjugating enzyme]-L-cysteine + [acceptor protein]-S-ubiquitinyl-L-cysteine.. It participates in protein modification; protein ubiquitination. In terms of biological role, E3 ubiquitin-protein ligase that mediates the polyubiquitination of lysine and cysteine residues on target proteins, such as CD3D, CYP3A4, CFTR, INSIG1, SOAT2/ACAT2 and APOB for proteasomal degradation. Component of a VCP/p97-AMFR/gp78 complex that participates in the final step of endoplasmic reticulum-associated degradation (ERAD). The VCP/p97-AMFR/gp78 complex is involved in the sterol-accelerated ERAD degradation of HMGCR through binding to the HMGCR-INSIG1 complex at the ER membrane. In addition, interaction of AMFR with AUP1 facilitates interaction of AMFR with ubiquitin-conjugating enzyme UBE2G2 and ubiquitin ligase RNF139, leading to sterol-induced HMGCR ubiquitination. The ubiquitinated HMGCR is then released from the ER into the cytosol for subsequent destruction. In addition to ubiquitination on lysine residues, catalyzes ubiquitination on cysteine residues: together with INSIG1, mediates polyubiquitination of SOAT2/ACAT2 at 'Cys-277', leading to its degradation when the lipid levels are low. Catalyzes ubiquitination and subsequent degradation of INSIG1 when cells are depleted of sterols. Mediates polyubiquitination of INSIG2 at 'Cys-215' in some tissues, leading to its degradation. Also regulates ERAD through the ubiquitination of UBL4A a component of the BAG6/BAT3 complex. Also acts as a scaffold protein to assemble a complex that couples ubiquitination, retranslocation and deglycosylation. Mediates tumor invasion and metastasis as a receptor for the GPI/autocrine motility factor. In association with LMBR1L and UBAC2, negatively regulates the canonical Wnt signaling pathway in the lymphocytes by promoting the ubiquitin-mediated degradation of CTNNB1 and Wnt receptors FZD6 and LRP6. Regulates NF-kappa-B and MAPK signaling pathways by mediating 'Lys-27'-linked polyubiquitination of TAB3 and promoting subsequent TAK1/MAP3K7 activation. Required for proper lipid homeostasis. The protein is E3 ubiquitin-protein ligase AMFR of Homo sapiens (Human).